The sequence spans 130 residues: Small ribosomal subunit protein uS9 (130 aa).

The protein belongs to the universal ribosomal protein uS9 family.

The sequence is that of Small ribosomal subunit protein uS9 from Mycoplasmoides gallisepticum (strain R(low / passage 15 / clone 2)) (Mycoplasma gallisepticum).